Reading from the N-terminus, the 526-residue chain is tRNA-2-methylthio-N(6)-dimethylallyladenosine synthase (526 aa).

The disordered stretch occupies residues 1–24; that stretch reads MTQQLNHAKVNQHPGQATLPETAE. Residues 28–144 enclose the MTTase N-terminal domain; sequence RTYEVKTYGC…LPTLLQRAEH (117 aa). [4Fe-4S] cluster is bound by residues Cys-37, Cys-73, Cys-107, Cys-181, Cys-185, and Cys-188. The 237-residue stretch at 167–403 folds into the Radical SAM core domain; it reads RESAYAGWVS…MVVQEQVCEE (237 aa). The TRAM domain maps to 406 to 477; it reads QKLIGTTVEL…PFFLIADSGV (72 aa).

This sequence belongs to the methylthiotransferase family. MiaB subfamily. Monomer. Requires [4Fe-4S] cluster as cofactor.

The protein localises to the cytoplasm. The enzyme catalyses N(6)-dimethylallyladenosine(37) in tRNA + (sulfur carrier)-SH + AH2 + 2 S-adenosyl-L-methionine = 2-methylsulfanyl-N(6)-dimethylallyladenosine(37) in tRNA + (sulfur carrier)-H + 5'-deoxyadenosine + L-methionine + A + S-adenosyl-L-homocysteine + 2 H(+). Its function is as follows. Catalyzes the methylthiolation of N6-(dimethylallyl)adenosine (i(6)A), leading to the formation of 2-methylthio-N6-(dimethylallyl)adenosine (ms(2)i(6)A) at position 37 in tRNAs that read codons beginning with uridine. In Corynebacterium glutamicum (strain R), this protein is tRNA-2-methylthio-N(6)-dimethylallyladenosine synthase.